The sequence spans 251 residues: 5'-nucleotidase SurE (251 aa).

A divalent metal cation contacts are provided by D8, D9, S39, and N91.

The protein belongs to the SurE nucleotidase family. It depends on a divalent metal cation as a cofactor.

It is found in the cytoplasm. The catalysed reaction is a ribonucleoside 5'-phosphate + H2O = a ribonucleoside + phosphate. Its function is as follows. Nucleotidase that shows phosphatase activity on nucleoside 5'-monophosphates. This is 5'-nucleotidase SurE from Nitrosococcus oceani (strain ATCC 19707 / BCRC 17464 / JCM 30415 / NCIMB 11848 / C-107).